The following is a 317-amino-acid chain: MTTALDQLKQYTTVVADTGDFQQLAQYKPQDATTNPSLILKAVQKDAYKPILEKTVRDHRDEPADFIIDRLLIAFGTEILKLIPGRVSTEVDARLSFDTQRSIDKGRELIKLYEDAGIGRERILIKLASTWEGIRAAEVLQKEGIKCNMTLLFSLVQAAASAEAGAQLISPFVGRIYDWYKKQAGADWDEAKNGGANDPGVQSVRRIYTYYKTFGYNTEVMGASFRTTSQITELAGCDLLTISPDLLQKLQDSNDTVERKLSPDALHDKPTERVAIDEASFRFQLNDEAMATEKLSEGIRVFAADAVKLEKLIDSLR.

Lys126 functions as the Schiff-base intermediate with substrate in the catalytic mechanism.

It belongs to the transaldolase family. Type 1 subfamily. As to quaternary structure, homodimer.

The protein resides in the cytoplasm. It carries out the reaction D-sedoheptulose 7-phosphate + D-glyceraldehyde 3-phosphate = D-erythrose 4-phosphate + beta-D-fructose 6-phosphate. The protein operates within carbohydrate degradation; pentose phosphate pathway; D-glyceraldehyde 3-phosphate and beta-D-fructose 6-phosphate from D-ribose 5-phosphate and D-xylulose 5-phosphate (non-oxidative stage): step 2/3. In terms of biological role, transaldolase is important for the balance of metabolites in the pentose-phosphate pathway. The protein is Transaldolase of Burkholderia ambifaria (strain MC40-6).